A 146-amino-acid polypeptide reads, in one-letter code: MQIQTIRQYLPHRYPFLLVDRVTEVTDNSIVGYKNVSINEEFLQGHFPEYPIMPGVLIVEALAQVSGVLGFIMNNETPKPGSLFLFAGAERVRFKKQVVAGDQLVLKSELVMQKRGIYKYNCTASVDGIVAATAEIMISHQKTEQA.

Residue His46 is part of the active site.

It belongs to the thioester dehydratase family. FabZ subfamily.

The protein localises to the cytoplasm. The enzyme catalyses a (3R)-hydroxyacyl-[ACP] = a (2E)-enoyl-[ACP] + H2O. Its function is as follows. Involved in unsaturated fatty acids biosynthesis. Catalyzes the dehydration of short chain beta-hydroxyacyl-ACPs and long chain saturated and unsaturated beta-hydroxyacyl-ACPs. This Acinetobacter baumannii (strain ATCC 17978 / DSM 105126 / CIP 53.77 / LMG 1025 / NCDC KC755 / 5377) protein is 3-hydroxyacyl-[acyl-carrier-protein] dehydratase FabZ.